The sequence spans 352 residues: MSDSPVTLPESIKLTEYSHGAGCGCKISPKVLSTILASQLPVFTDPNLLVGNQSRDDAAVYKLNDDIGIISTTDFFMPIVDDPFTFGRIAATNAISDIYAMGGTPIMAIAILGWPINKLPAEVAQQVVDGGRQACMEAGIMLAGGHSIDAPEPIFGLAVTGQIALTDLKQNDTAKAGDRLYLTKPIGIGILTTAQKQKKLQDEDSHIAVNAMCQLNTIGTTIAKISGVNALTDVTGFGLAGHLLEMCQGAKLTAKLKFDAVPLLPRALDYLALGCVPGGTHRNYDSYGEHLPELSEHQKAILCDPQTSGGLLVAVSAEAEAELIDLLDAHHIAPICIGSLETPTTEVNVVLC.

Residue Cys-23 is part of the active site. ATP is bound by residues Lys-26 and Ser-54–Asp-56. Position 57 (Asp-57) interacts with Mg(2+). Residues Asp-74, Asp-97, and Gly-145–Ser-147 contribute to the ATP site. Residue Asp-97 participates in Mg(2+) binding. Asp-233 provides a ligand contact to Mg(2+).

It belongs to the selenophosphate synthase 1 family. Class I subfamily. As to quaternary structure, homodimer. Mg(2+) serves as cofactor.

It catalyses the reaction hydrogenselenide + ATP + H2O = selenophosphate + AMP + phosphate + 2 H(+). Synthesizes selenophosphate from selenide and ATP. The protein is Selenide, water dikinase of Shewanella baltica (strain OS155 / ATCC BAA-1091).